A 155-amino-acid polypeptide reads, in one-letter code: UPF0303 protein lp_3613 (155 aa).

Belongs to the UPF0303 family.

This is UPF0303 protein lp_3613 from Lactiplantibacillus plantarum (strain ATCC BAA-793 / NCIMB 8826 / WCFS1) (Lactobacillus plantarum).